The sequence spans 211 residues: MTPWLGLVVLLSCWSLGHWGAEACTCSPSHPQDAFCNSDIVIRAKVVGKKLVKEGPFGTLVYTIKQMKMYRGFSKMPHVQYIHTEASESLCGLKLEVNKYQYLLTGRVYEGKMYTGLCNFVERWDHLTLSQRKGLNYRYHLGCNCKIKSCYYLPCFVTSKNECLWTDMLSNFGYPGYQSKHYACIRQKGGYCSWYRGWAPPDKSISNATDP.

Positions 1–23 (MTPWLGLVVLLSCWSLGHWGAEA) are cleaved as a signal peptide. Residue C24 participates in Zn(2+) binding. Involved in metalloproteinase-binding stretches follow at residues 24–27 (CTCS) and 88–89 (ES). 6 cysteine pairs are disulfide-bonded: C24-C91, C26-C118, C36-C143, C145-C192, C150-C155, and C163-C184. Positions 24 to 143 (CTCSPSHPQD…GLNYRYHLGC (120 aa)) constitute an NTR domain. Residues 105–188 (TGRVYEGKMY…SKHYACIRQK (84 aa)) form a mediates interaction with EFEMP1 region.

Belongs to the protease inhibitor I35 (TIMP) family. As to quaternary structure, interacts with EFEMP1. Interacts with KDR. As to expression, highest levels are found in kidney, lung and brain followed by ovary and uterus. Low levels are found in bone.

The protein localises to the secreted. The protein resides in the extracellular space. It is found in the extracellular matrix. In terms of biological role, mediates a variety of processes including matrix regulation and turnover, inflammation, and angiogenesis, through reversible inhibition of zinc protease superfamily enzymes, primarily matrix metalloproteinases (MMPs). Regulates extracellular matrix (ECM) remodeling through inhibition of matrix metalloproteinases (MMP) including MMP-1, MMP-2, MMP-3, MMP-7, MMP-9, MMP-13, MMP-14 and MMP-15. Additionally, modulates the processing of amyloid precursor protein (APP) and apolipoprotein E receptor ApoER2 by inhibiting two alpha-secretases ADAM10 and ADAM17. Functions as a tumor suppressor and a potent inhibitor of angiogenesis. Exerts its anti-angiogenic effect by directly interacting with vascular endothelial growth factor (VEGF) receptor-2/KDR, preventing its binding to the VEGFA ligand. Selectively induces apoptosis in angiogenic endothelial cells through a caspase-independent cell death pathway. Mechanistically, inhibits matrix-induced focal adhesion kinase PTK2 tyrosine phosphorylation and association with paxillin/PXN and disrupts the incorporation of ITGB3, PTK2 and PXN into focal adhesion contacts on the matrix. This chain is Metalloproteinase inhibitor 3 (Timp3), found in Mus musculus (Mouse).